We begin with the raw amino-acid sequence, 787 residues long: Endonuclease MutS2 (787 aa).

334-341 (GPNTGGKT) serves as a coordination point for ATP. Residues 685–709 (KAQDPAKSAKQPRASVKRSGSSGMS) form a disordered region. Positions 712-787 (LDLRGHRYEE…GDGSTVVHFK (76 aa)) constitute a Smr domain.

Belongs to the DNA mismatch repair MutS family. MutS2 subfamily. As to quaternary structure, homodimer. Binds to stalled ribosomes, contacting rRNA.

Endonuclease that is involved in the suppression of homologous recombination and thus may have a key role in the control of bacterial genetic diversity. Functionally, acts as a ribosome collision sensor, splitting the ribosome into its 2 subunits. Detects stalled/collided 70S ribosomes which it binds and splits by an ATP-hydrolysis driven conformational change. Acts upstream of the ribosome quality control system (RQC), a ribosome-associated complex that mediates the extraction of incompletely synthesized nascent chains from stalled ribosomes and their subsequent degradation. Probably generates substrates for RQC. This chain is Endonuclease MutS2, found in Levilactobacillus brevis (strain ATCC 367 / BCRC 12310 / CIP 105137 / JCM 1170 / LMG 11437 / NCIMB 947 / NCTC 947) (Lactobacillus brevis).